The sequence spans 481 residues: Aspartyl/glutamyl-tRNA(Asn/Gln) amidotransferase subunit B (481 aa).

The protein belongs to the GatB/GatE family. GatB subfamily. In terms of assembly, heterotrimer of A, B and C subunits.

It catalyses the reaction L-glutamyl-tRNA(Gln) + L-glutamine + ATP + H2O = L-glutaminyl-tRNA(Gln) + L-glutamate + ADP + phosphate + H(+). The enzyme catalyses L-aspartyl-tRNA(Asn) + L-glutamine + ATP + H2O = L-asparaginyl-tRNA(Asn) + L-glutamate + ADP + phosphate + 2 H(+). Functionally, allows the formation of correctly charged Asn-tRNA(Asn) or Gln-tRNA(Gln) through the transamidation of misacylated Asp-tRNA(Asn) or Glu-tRNA(Gln) in organisms which lack either or both of asparaginyl-tRNA or glutaminyl-tRNA synthetases. The reaction takes place in the presence of glutamine and ATP through an activated phospho-Asp-tRNA(Asn) or phospho-Glu-tRNA(Gln). This chain is Aspartyl/glutamyl-tRNA(Asn/Gln) amidotransferase subunit B, found in Pseudomonas fluorescens (strain ATCC BAA-477 / NRRL B-23932 / Pf-5).